Consider the following 85-residue polypeptide: Large ribosomal subunit protein bL27 (85 aa).

The disordered stretch occupies residues 1–21 (MAHKKAGGSTRNGRDSESKRL).

Belongs to the bacterial ribosomal protein bL27 family.

The polypeptide is Large ribosomal subunit protein bL27 (Pseudomonas putida (strain W619)).